The following is a 92-amino-acid chain: Sec-independent protein translocase protein TatA (92 aa).

A helical transmembrane segment spans residues 1 to 21; the sequence is MGIFDWKHWIVILVVVVLVFG. The disordered stretch occupies residues 44–92; the sequence is NDDEKPADPVVNPVPPAQPVHPQATQPITERRTFDVQAEKVEEPTRKDS. Residues 72 to 92 show a composition bias toward basic and acidic residues; the sequence is TERRTFDVQAEKVEEPTRKDS.

Belongs to the TatA/E family. As to quaternary structure, the Tat system comprises two distinct complexes: a TatABC complex, containing multiple copies of TatA, TatB and TatC subunits, and a separate TatA complex, containing only TatA subunits. Substrates initially bind to the TatABC complex, which probably triggers association of the separate TatA complex to form the active translocon.

Its subcellular location is the cell inner membrane. Its function is as follows. Part of the twin-arginine translocation (Tat) system that transports large folded proteins containing a characteristic twin-arginine motif in their signal peptide across membranes. TatA could form the protein-conducting channel of the Tat system. The polypeptide is Sec-independent protein translocase protein TatA (Pseudomonas fluorescens (strain SBW25)).